A 56-amino-acid chain; its full sequence is Large ribosomal subunit protein bL32 (56 aa).

Over residues 1–16 the composition is skewed to basic residues; it reads MAVQKSKKSRARRGMR. Residues 1-56 are disordered; sequence MAVQKSKKSRARRGMRRSHDAISGPSLTVDQTSGETHRRHHVTADGYYKGVQVISK. The segment covering 25–34 has biased composition (polar residues); the sequence is PSLTVDQTSG.

The protein belongs to the bacterial ribosomal protein bL32 family.

This chain is Large ribosomal subunit protein bL32, found in Pseudoalteromonas translucida (strain TAC 125).